The following is a 569-amino-acid chain: Dihydroxy-acid dehydratase (569 aa).

A Mg(2+)-binding site is contributed by Asp80. Cys121 lines the [2Fe-2S] cluster pocket. Mg(2+) contacts are provided by Asp122 and Lys123. An N6-carboxylysine modification is found at Lys123. A [2Fe-2S] cluster-binding site is contributed by Cys194. Mg(2+) is bound at residue Glu446. Residue Ser472 is the Proton acceptor of the active site.

Belongs to the IlvD/Edd family. Homodimer. The cofactor is [2Fe-2S] cluster. Mg(2+) is required as a cofactor.

It carries out the reaction (2R)-2,3-dihydroxy-3-methylbutanoate = 3-methyl-2-oxobutanoate + H2O. It catalyses the reaction (2R,3R)-2,3-dihydroxy-3-methylpentanoate = (S)-3-methyl-2-oxopentanoate + H2O. It participates in amino-acid biosynthesis; L-isoleucine biosynthesis; L-isoleucine from 2-oxobutanoate: step 3/4. The protein operates within amino-acid biosynthesis; L-valine biosynthesis; L-valine from pyruvate: step 3/4. Its function is as follows. Functions in the biosynthesis of branched-chain amino acids. Catalyzes the dehydration of (2R,3R)-2,3-dihydroxy-3-methylpentanoate (2,3-dihydroxy-3-methylvalerate) into 2-oxo-3-methylpentanoate (2-oxo-3-methylvalerate) and of (2R)-2,3-dihydroxy-3-methylbutanoate (2,3-dihydroxyisovalerate) into 2-oxo-3-methylbutanoate (2-oxoisovalerate), the penultimate precursor to L-isoleucine and L-valine, respectively. The polypeptide is Dihydroxy-acid dehydratase (Desulforudis audaxviator (strain MP104C)).